Reading from the N-terminus, the 385-residue chain is Muconate cycloisomerase 1-2 (385 aa).

Lysine 171 is an active-site residue. The Mn(2+) site is built by glutamate 226 and aspartate 251.

It belongs to the mandelate racemase/muconate lactonizing enzyme family. Homooctamer. The cofactor is Mn(2+).

It carries out the reaction (S)-muconolactone = cis,cis-muconate + H(+). It participates in aromatic compound metabolism; beta-ketoadipate pathway; 5-oxo-4,5-dihydro-2-furylacetate from catechol: step 2/3. Catalyzes a syn cycloisomerization. This is Muconate cycloisomerase 1-2 (catB2) from Acinetobacter lwoffii.